The sequence spans 329 residues: GDP-mannose transporter (329 aa).

At 1–13 (MSELKVDTGRLSH) the chain is on the cytoplasmic side. Residues 14-34 (IANSGPMSILAYCASSILMTV) form a helical membrane-spanning segment. At 35–44 (TNKCVVGSDK) the chain is on the lumenal side. Residues 45 to 65 (FNMLFVMLFAQSLVCVTALVL) form a helical membrane-spanning segment. Topologically, residues 66 to 79 (LKALGYVQYRPLNK) are cytoplasmic. The chain crosses the membrane as a helical span at residues 80–100 (VDVKNWLLISVLLVLMTYTSS). At 101-109 (RALKYLAVP) the chain is on the lumenal side. The chain crosses the membrane as a helical span at residues 110–130 (IYTIFKNLTIILIAYGEVLFF). Over 131-133 (GGR) the chain is Cytoplasmic. Residues 134–154 (VTAMELSSFLLIVLSSVVATL) form a helical membrane-spanning segment. At 155 to 174 (GDQQALAKKPLAAAVESILG) the chain is on the lumenal side. Residues 175–195 (LNVGYFWMFTNCICSALFVLI) form a helical membrane-spanning segment. Topologically, residues 196 to 214 (MRKRIALTKFKDFDTMFYN) are cytoplasmic. A helical transmembrane segment spans residues 215-235 (NILSLPLLMLASFMFEDWGAA). At 236-245 (NIARNLTKDY) the chain is on the lumenal side. N-linked (GlcNAc...) asparagine glycosylation occurs at asparagine 240. A helical transmembrane segment spans residues 246-266 (IIIMIISGLASVGISYCSGWC). Residues 267 to 273 (VRVTSST) are Cytoplasmic-facing. Residues 274–294 (TYSMVGALNKLPIALSGLLFF) traverse the membrane as a helical segment. At 295-298 (DAPK) the chain is on the lumenal side. A helical membrane pass occupies residues 299–319 (NFLSIFSIFLGFLSGIVYAVA). Residues 320–329 (KQKKQSQPAN) lie on the Cytoplasmic side of the membrane.

Belongs to the TPT transporter family. SLC35D subfamily. In terms of assembly, homooligomer.

The protein localises to the golgi apparatus membrane. Its subcellular location is the cytoplasmic vesicle membrane. It localises to the endoplasmic reticulum membrane. In terms of biological role, involved in the import of GDP-mannose from the cytoplasm into the Golgi lumen. The polypeptide is GDP-mannose transporter (VRG4) (Eremothecium gossypii (strain ATCC 10895 / CBS 109.51 / FGSC 9923 / NRRL Y-1056) (Yeast)).